A 125-amino-acid polypeptide reads, in one-letter code: Small ribosomal subunit protein uS12m (125 aa).

The interval 1 to 51 (MPTKNQLIRHGREEKRRTDRTRALDQCPQKQGVCPRVSTRTPKKPNSAPRK) is disordered. The span at 10–23 (HGREEKRRTDRTRA) shows a compositional bias: basic and acidic residues.

Belongs to the universal ribosomal protein uS12 family.

The protein localises to the mitochondrion. Its function is as follows. Protein S12 is involved in the translation initiation step. In Nicotiana sylvestris (Wood tobacco), this protein is Small ribosomal subunit protein uS12m (RPS12).